Reading from the N-terminus, the 442-residue chain is Putative major teichoic acid biosynthesis protein C (442 aa).

In terms of biological role, unknown. Might be involved in poly(glycerol phosphate) teichoic acid biosynthesis. The polypeptide is Putative major teichoic acid biosynthesis protein C (tagC) (Bacillus subtilis (strain 168)).